We begin with the raw amino-acid sequence, 131 residues long: Inactive protein FON2 SPARE1 (131 aa).

Residues 67–131 (SPSSLTTTDR…VPTGPNPLHH (65 aa)) form a disordered region. Basic residues predominate over residues 76-97 (RHHHHHRHHGHHHHRGHDRWNR).

This sequence belongs to the CLV3/ESR signal peptide family. Expressed in all aerial apical meristems, including the floral and inflorescence meristems in the reproductive phase and the shoot apical meristem in the vegetative phase. Also detected in the primordia of lateral organs such as the leaf and the floral organs.

In terms of biological role, non functional suppressor of the fon2 mutation. In Oryza sativa subsp. japonica, the protein has a single amino acid substitution at the putative processing site of the signal peptide while in all the other varieties/species of domesticated and wild rice tested the protein is functional. The protein is Inactive protein FON2 SPARE1 (FOS1) of Oryza sativa subsp. japonica (Rice).